A 385-amino-acid chain; its full sequence is Mitochondrial protein C2orf69 (385 aa).

The N-terminal 24 residues, 1 to 24 (MWGFRLLRSPPLLLLLPQLGIGNA), are a transit peptide targeting the mitochondrion.

It belongs to the C2orf69 family.

It localises to the mitochondrion matrix. In terms of biological role, may play a role in the respiratory chain. In Homo sapiens (Human), this protein is Mitochondrial protein C2orf69 (C2orf69).